The sequence spans 396 residues: Flap endonuclease 1 (396 aa).

The interval 1–105 is N-domain; that stretch reads MGIHGLTKLL…DQLAQRTERR (105 aa). Asp34 contributes to the Mg(2+) binding site. Position 71 (Arg71) interacts with DNA. 5 residues coordinate Mg(2+): Asp87, Glu159, Glu161, Asp180, and Asp182. Positions 123 to 254 are I-domain; that stretch reads AIEKYSKRSV…VRALQMIKKH (132 aa). DNA is bound at residue Glu159. DNA-binding residues include Gly232 and Asp234. Asp234 serves as a coordination point for Mg(2+). The interval 338-346 is interaction with PCNA; sequence NQGRLESFF. The interval 341–396 is disordered; that stretch reads RLESFFTSLPKPATADKAKPKEDDKKRKAGAAAGGKDAKGGAAAKKGKFGVGGGKK. Positions 354–366 are enriched in basic and acidic residues; sequence TADKAKPKEDDKK. Low complexity predominate over residues 370 to 384; the sequence is GAAAGGKDAKGGAAA.

Belongs to the XPG/RAD2 endonuclease family. FEN1 subfamily. As to quaternary structure, interacts with PCNA. Three molecules of FEN1 bind to one PCNA trimer with each molecule binding to one PCNA monomer. PCNA stimulates the nuclease activity without altering cleavage specificity. Mg(2+) serves as cofactor. Phosphorylated. Phosphorylation upon DNA damage induces relocalization to the nuclear plasma.

The protein resides in the nucleus. The protein localises to the nucleolus. It is found in the nucleoplasm. It localises to the mitochondrion. Structure-specific nuclease with 5'-flap endonuclease and 5'-3' exonuclease activities involved in DNA replication and repair. During DNA replication, cleaves the 5'-overhanging flap structure that is generated by displacement synthesis when DNA polymerase encounters the 5'-end of a downstream Okazaki fragment. It enters the flap from the 5'-end and then tracks to cleave the flap base, leaving a nick for ligation. Also involved in the long patch base excision repair (LP-BER) pathway, by cleaving within the apurinic/apyrimidinic (AP) site-terminated flap. Acts as a genome stabilization factor that prevents flaps from equilibrating into structures that lead to duplications and deletions. Also possesses 5'-3' exonuclease activity on nicked or gapped double-stranded DNA, and exhibits RNase H activity. Also involved in replication and repair of rDNA and in repairing mitochondrial DNA. This chain is Flap endonuclease 1, found in Chlamydomonas reinhardtii (Chlamydomonas smithii).